The chain runs to 236 residues: MYLFYQLILEIFQIMSCQNYQSYGCGTYPCVTYGNCYTTCASPCLPYPTNCVQVCTSSQPCPSPCPIPVPCPVTIVEYITTAPTATTIESSPTGMALTPIPVGSTSIPSGTVTVITGYAATPVRSIGGITLNSALGQFTVPLAGSYLITGYIGFSYNAVGIREVYVYKVDGATSVITLISTDSRNTTATNPTYISYSAMDYFNAGDRIFIAAAQNSGSTITTTADNRIAITRMNRQ.

It is found in the virion. This is an uncharacterized protein from Acanthamoeba polyphaga (Amoeba).